The chain runs to 272 residues: Tryptophan synthase alpha chain (272 aa).

Active-site proton acceptor residues include glutamate 60 and aspartate 71.

The protein belongs to the TrpA family. As to quaternary structure, tetramer of two alpha and two beta chains.

The enzyme catalyses (1S,2R)-1-C-(indol-3-yl)glycerol 3-phosphate + L-serine = D-glyceraldehyde 3-phosphate + L-tryptophan + H2O. It participates in amino-acid biosynthesis; L-tryptophan biosynthesis; L-tryptophan from chorismate: step 5/5. The alpha subunit is responsible for the aldol cleavage of indoleglycerol phosphate to indole and glyceraldehyde 3-phosphate. The polypeptide is Tryptophan synthase alpha chain (Methanosarcina acetivorans (strain ATCC 35395 / DSM 2834 / JCM 12185 / C2A)).